Here is an 89-residue protein sequence, read N- to C-terminus: Small ribosomal subunit protein uS15 (89 aa).

The protein belongs to the universal ribosomal protein uS15 family. Part of the 30S ribosomal subunit. Forms a bridge to the 50S subunit in the 70S ribosome, contacting the 23S rRNA.

Functionally, one of the primary rRNA binding proteins, it binds directly to 16S rRNA where it helps nucleate assembly of the platform of the 30S subunit by binding and bridging several RNA helices of the 16S rRNA. Forms an intersubunit bridge (bridge B4) with the 23S rRNA of the 50S subunit in the ribosome. The chain is Small ribosomal subunit protein uS15 from Frankia casuarinae (strain DSM 45818 / CECT 9043 / HFP020203 / CcI3).